The primary structure comprises 658 residues: Probable Xaa-Pro aminopeptidase P (658 aa).

Positions 449, 460, 558, and 572 each coordinate Mn(2+).

It belongs to the peptidase M24B family. Mn(2+) serves as cofactor.

It catalyses the reaction Release of any N-terminal amino acid, including proline, that is linked to proline, even from a dipeptide or tripeptide.. In terms of biological role, catalyzes the removal of a penultimate prolyl residue from the N-termini of peptides. This chain is Probable Xaa-Pro aminopeptidase P (ampp), found in Aspergillus clavatus (strain ATCC 1007 / CBS 513.65 / DSM 816 / NCTC 3887 / NRRL 1 / QM 1276 / 107).